Here is a 653-residue protein sequence, read N- to C-terminus: MADTLPSEFDVIVIGTGLPESIIAAACSRSGRRVLHVDSRSYYGGNWASFSFSGLLSWLKEYQENSDIVSDSPVWQDQILENEEAIALSRKDKTIQHVEVFCYASQDLHEDVEEAGALQKNHALVTSANSTEAADSAFLPTEDESLSTMSCEMLTEQTPSSDPENALEVNGAEVTGEKENHCDDKTCVPSTSAEDMSENVPIAEDTTEQPKKNRITYSQIIKEGRRFNIDLVSKLLYSRGLLIDLLIKSNVSRYAEFKNITRILAFREGRVEQVPCSRADVFNSKQLTMVEKRMLMKFLTFCMEYEKYPDEYKGYEEITFYEYLKTQKLTPNLQYIVMHSIAMTSETASSTIDGLKATKNFLHCLGRYGNTPFLFPLYGQGELPQCFCRMCAVFGGIYCLRHSVQCLVVDKESRKCKAIIDQFGQRIISEHFLVEDSYFPENMCSRVQYRQISRAVLITDRSVLKTDSDQQISILTVPAEEPGTFAVRVIELCSSTMTCMKGTYLVHLTCTSSKTAREDLESVVQKLFVPYTEMEIENEQVEKPRILWALYFNMRDSSDISRSCYNDLPSNVYVCSGPDCGLGNDNAVKQAETLFQEICPNEDFCPPPPNPEDIILDGDSLQPEASESSAIPEANSETFKESTNLGNLEESSE.

Residues 606–653 (PPPPNPEDIILDGDSLQPEASESSAIPEANSETFKESTNLGNLEESSE) are disordered. A compositionally biased stretch (polar residues) spans 623–646 (PEASESSAIPEANSETFKESTNLG).

The protein belongs to the Rab GDI family. Monomer. Heterotrimer composed of RABGGTA, RABGGTB and CHM; within this trimer, RABGGTA and RABGGTB form the catalytic component B, while CHM (component A) mediates Rab protein binding. Can associate with the Rab GGTase dimer (RGGT or component B) prior to Rab protein binding; the association is stabilized by geranylgeranyl pyrophosphate (GGpp). The CHM:RGGT:Rab complex is destabilized by GGpp. Interacts with RAB1A, RAB1B, RAB5A, RAB7A and RAB27A and mediates their prenylation. Interacts with the non-phosphorylated forms of RAB3A, RAB3B, RAB3C, RAB3D, RAB5B, RAB5C, RAB8A, RAB8B, RAB10, RAB12, RAB35, and RAB43.

Its subcellular location is the cytoplasm. The protein resides in the cytosol. Substrate-binding subunit of the Rab geranylgeranyltransferase (GGTase) complex. Binds unprenylated Rab proteins and presents the substrate peptide to the catalytic component B composed of RABGGTA and RABGGTB, and remains bound to it after the geranylgeranyl transfer reaction. The component A is thought to be regenerated by transferring its prenylated Rab back to the donor membrane. Besides, a pre-formed complex consisting of CHM and the Rab GGTase dimer (RGGT or component B) can bind to and prenylate Rab proteins; this alternative pathway is proposed to be the predominant pathway for Rab protein geranylgeranylation. In Homo sapiens (Human), this protein is Rab proteins geranylgeranyltransferase component A 1 (CHM).